A 279-amino-acid chain; its full sequence is Putative colanic acid biosynthesis glycosyl transferase WcaA (279 aa).

The protein to R.meliloti ExoO.

It functions in the pathway slime biogenesis; slime polysaccharide biosynthesis. The protein is Putative colanic acid biosynthesis glycosyl transferase WcaA (wcaA) of Escherichia coli (strain K12).